Reading from the N-terminus, the 250-residue chain is Ditrans,polycis-undecaprenyl-diphosphate synthase ((2E,6E)-farnesyl-diphosphate specific) (250 aa).

The active site involves Asp-27. Asp-27 provides a ligand contact to Mg(2+). Substrate is bound by residues 28–31 (GNGR), Trp-32, Arg-40, His-44, and 72–74 (SSE). Residue Asn-75 is the Proton acceptor of the active site. Substrate is bound by residues Trp-76, Arg-78, and Arg-195. Residue His-200 participates in Mg(2+) binding. 201–203 (RIS) provides a ligand contact to substrate. Glu-214 provides a ligand contact to Mg(2+).

Belongs to the UPP synthase family. In terms of assembly, homodimer. It depends on Mg(2+) as a cofactor.

It catalyses the reaction 8 isopentenyl diphosphate + (2E,6E)-farnesyl diphosphate = di-trans,octa-cis-undecaprenyl diphosphate + 8 diphosphate. Catalyzes the sequential condensation of isopentenyl diphosphate (IPP) with (2E,6E)-farnesyl diphosphate (E,E-FPP) to yield (2Z,6Z,10Z,14Z,18Z,22Z,26Z,30Z,34E,38E)-undecaprenyl diphosphate (di-trans,octa-cis-UPP). UPP is the precursor of glycosyl carrier lipid in the biosynthesis of bacterial cell wall polysaccharide components such as peptidoglycan and lipopolysaccharide. The protein is Ditrans,polycis-undecaprenyl-diphosphate synthase ((2E,6E)-farnesyl-diphosphate specific) of Blochmanniella floridana.